Consider the following 134-residue polypeptide: Large ribosomal subunit protein eL32 (134 aa).

It belongs to the eukaryotic ribosomal protein eL32 family.

This chain is Large ribosomal subunit protein eL32 (RpL32), found in Drosophila melanogaster (Fruit fly).